The sequence spans 127 residues: uncharacterized protein (127 aa).

It is found in the mitochondrion. This is an uncharacterized protein from Arabidopsis thaliana (Mouse-ear cress).